Here is a 399-residue protein sequence, read N- to C-terminus: Succinate--CoA ligase [ADP-forming] subunit beta (399 aa).

Residues 9-254 (KAVLQPFGVS…TTEEDAKEIE (246 aa)) form the ATP-grasp domain. Residues Lys-46, 53 to 55 (GRG), Glu-109, Ser-112, and Glu-117 each bind ATP. Residues Asn-209 and Asp-223 each coordinate Mg(2+). Residues Asn-274 and 331 to 333 (GIM) contribute to the substrate site.

This sequence belongs to the succinate/malate CoA ligase beta subunit family. Heterotetramer of two alpha and two beta subunits. It depends on Mg(2+) as a cofactor.

It catalyses the reaction succinate + ATP + CoA = succinyl-CoA + ADP + phosphate. It carries out the reaction GTP + succinate + CoA = succinyl-CoA + GDP + phosphate. It functions in the pathway carbohydrate metabolism; tricarboxylic acid cycle; succinate from succinyl-CoA (ligase route): step 1/1. Its function is as follows. Succinyl-CoA synthetase functions in the citric acid cycle (TCA), coupling the hydrolysis of succinyl-CoA to the synthesis of either ATP or GTP and thus represents the only step of substrate-level phosphorylation in the TCA. The beta subunit provides nucleotide specificity of the enzyme and binds the substrate succinate, while the binding sites for coenzyme A and phosphate are found in the alpha subunit. This Rhodopseudomonas palustris (strain BisA53) protein is Succinate--CoA ligase [ADP-forming] subunit beta.